A 97-amino-acid chain; its full sequence is Large ribosomal subunit protein uL23 (97 aa).

Belongs to the universal ribosomal protein uL23 family. As to quaternary structure, part of the 50S ribosomal subunit. Contacts protein L29, and trigger factor when it is bound to the ribosome.

In terms of biological role, one of the early assembly proteins it binds 23S rRNA. One of the proteins that surrounds the polypeptide exit tunnel on the outside of the ribosome. Forms the main docking site for trigger factor binding to the ribosome. The protein is Large ribosomal subunit protein uL23 of Agrobacterium fabrum (strain C58 / ATCC 33970) (Agrobacterium tumefaciens (strain C58)).